Here is a 353-residue protein sequence, read N- to C-terminus: Photosystem II D2 protein (353 aa).

The residue at position 2 (threonine 2) is an N-acetylthreonine. At threonine 2 the chain carries Phosphothreonine. Residues 41–61 traverse the membrane as a helical segment; that stretch reads CAYFALGGWFTGTTFVTSWYT. Residue histidine 118 participates in chlorophyll a binding. A helical membrane pass occupies residues 125-141; it reads GFMLRQFELARSVQLRP. Residues glutamine 130 and asparagine 143 each coordinate pheophytin a. Residues 153–166 form a helical membrane-spanning segment; it reads VFVSVFFIYPLGQS. Histidine 198 contacts chlorophyll a. Residues 208 to 228 form a helical membrane-spanning segment; the sequence is AALLCAIHGATVENTLFEDGD. Positions 215 and 262 each coordinate a plastoquinone. Residue histidine 215 participates in Fe cation binding. Residue histidine 269 participates in Fe cation binding. The chain crosses the membrane as a helical span at residues 279-295; sequence GLWMSALGVVGLALNLR.

Belongs to the reaction center PufL/M/PsbA/D family. As to quaternary structure, PSII is composed of 1 copy each of membrane proteins PsbA, PsbB, PsbC, PsbD, PsbE, PsbF, PsbH, PsbI, PsbJ, PsbK, PsbL, PsbM, PsbT, PsbX, PsbY, PsbZ, Psb30/Ycf12, at least 3 peripheral proteins of the oxygen-evolving complex and a large number of cofactors. It forms dimeric complexes. The D1/D2 heterodimer binds P680, chlorophylls that are the primary electron donor of PSII, and subsequent electron acceptors. It shares a non-heme iron and each subunit binds pheophytin, quinone, additional chlorophylls, carotenoids and lipids. There is also a Cl(-1) ion associated with D1 and D2, which is required for oxygen evolution. The PSII complex binds additional chlorophylls, carotenoids and specific lipids. serves as cofactor.

It localises to the plastid membrane. It catalyses the reaction 2 a plastoquinone + 4 hnu + 2 H2O = 2 a plastoquinol + O2. Photosystem II (PSII) is a light-driven water:plastoquinone oxidoreductase that uses light energy to abstract electrons from H(2)O, generating O(2) and a proton gradient subsequently used for ATP formation. It consists of a core antenna complex that captures photons, and an electron transfer chain that converts photonic excitation into a charge separation. The D1/D2 (PsbA/PsbD) reaction center heterodimer binds P680, the primary electron donor of PSII as well as several subsequent electron acceptors. D2 is needed for assembly of a stable PSII complex. This is Photosystem II D2 protein from Cuscuta exaltata (Tall dodder).